A 533-amino-acid polypeptide reads, in one-letter code: Chromosomal replication initiator protein DnaA (533 aa).

Positions 1–72 (MNDFWQHCSA…DLARDFWNAP (72 aa)) are domain I, interacts with DnaA modulators. Residues 72 to 196 (PIEVQFVLDP…EAADSMYERS (125 aa)) are domain II. The interval 83–110 (AGQRSPAGATPLAPRAPLPSANPAPVGP) is disordered. Positions 96-110 (PRAPLPSANPAPVGP) are enriched in pro residues. The domain III, AAA+ region stretch occupies residues 197-413 (KLNPVLTFDN…GALRKILAYS (217 aa)). ATP-binding residues include Gly241, Gly243, Lys244, and Thr245. The segment at 414 to 533 (KFHGREITIE…LHVLEQTLKG (120 aa)) is domain IV, binds dsDNA.

Belongs to the DnaA family. In terms of assembly, oligomerizes as a right-handed, spiral filament on DNA at oriC.

Its subcellular location is the cytoplasm. Its function is as follows. Plays an essential role in the initiation and regulation of chromosomal replication. ATP-DnaA binds to the origin of replication (oriC) to initiate formation of the DNA replication initiation complex once per cell cycle. Binds the DnaA box (a 9 base pair repeat at the origin) and separates the double-stranded (ds)DNA. Forms a right-handed helical filament on oriC DNA; dsDNA binds to the exterior of the filament while single-stranded (ss)DNA is stabiized in the filament's interior. The ATP-DnaA-oriC complex binds and stabilizes one strand of the AT-rich DNA unwinding element (DUE), permitting loading of DNA polymerase. After initiation quickly degrades to an ADP-DnaA complex that is not apt for DNA replication. Binds acidic phospholipids. The polypeptide is Chromosomal replication initiator protein DnaA (Burkholderia mallei (strain NCTC 10247)).